Consider the following 240-residue polypeptide: Dihydromonapterin reductase (240 aa).

Tyr-152 (proton acceptor) is an active-site residue.

Belongs to the short-chain dehydrogenases/reductases (SDR) family. FolM subfamily.

It carries out the reaction (6S)-5,6,7,8-tetrahydrofolate + NADP(+) = 7,8-dihydrofolate + NADPH + H(+). The catalysed reaction is 7,8-dihydromonapterin + NADPH + H(+) = 5,6,7,8-tetrahydromonapterin + NADP(+). Its function is as follows. Catalyzes the reduction of dihydromonapterin to tetrahydromonapterin. Also has lower activity with dihydrofolate. The sequence is that of Dihydromonapterin reductase (folM) from Shigella flexneri serotype 5b (strain 8401).